The primary structure comprises 343 residues: Protease HtpX homolog (343 aa).

2 consecutive transmembrane segments (helical) span residues 7 to 24 (TMLL…GYLV) and 29 to 46 (GMVV…FSYW). His-130 contributes to the Zn(2+) binding site. Glu-131 is an active-site residue. His-134 contacts Zn(2+). The next 2 helical transmembrane spans lie at 145–165 (LTAT…LMGM) and 177–197 (GAGM…AMLV). Residue Glu-206 coordinates Zn(2+). The disordered stretch occupies residues 308–343 (NLEDEDLNPEAQNGFTHNQKKKTVRRGKDRPTWLRH). A compositionally biased stretch (basic residues) spans 325–335 (NQKKKTVRRGK).

Belongs to the peptidase M48B family. Zn(2+) is required as a cofactor.

It localises to the cell inner membrane. This is Protease HtpX homolog from Bartonella bacilliformis (strain ATCC 35685 / KC583 / Herrer 020/F12,63).